The chain runs to 418 residues: UDP-N-acetylglucosamine 1-carboxyvinyltransferase 1 (418 aa).

22–23 (KN) serves as a coordination point for phosphoenolpyruvate. Arginine 94 is a binding site for UDP-N-acetyl-alpha-D-glucosamine. The Proton donor role is filled by cysteine 118. The residue at position 118 (cysteine 118) is a 2-(S-cysteinyl)pyruvic acid O-phosphothioketal. UDP-N-acetyl-alpha-D-glucosamine is bound by residues 123-127 (RPIDL), aspartate 306, and isoleucine 328.

It belongs to the EPSP synthase family. MurA subfamily.

It is found in the cytoplasm. It carries out the reaction phosphoenolpyruvate + UDP-N-acetyl-alpha-D-glucosamine = UDP-N-acetyl-3-O-(1-carboxyvinyl)-alpha-D-glucosamine + phosphate. Its pathway is cell wall biogenesis; peptidoglycan biosynthesis. Its function is as follows. Cell wall formation. Adds enolpyruvyl to UDP-N-acetylglucosamine. This Clostridium acetobutylicum (strain ATCC 824 / DSM 792 / JCM 1419 / IAM 19013 / LMG 5710 / NBRC 13948 / NRRL B-527 / VKM B-1787 / 2291 / W) protein is UDP-N-acetylglucosamine 1-carboxyvinyltransferase 1.